Reading from the N-terminus, the 189-residue chain is Ras-like protein 1 (189 aa).

Residue 10-17 (GGGGVGKS) participates in GTP binding. An Effector region motif is present at residues 32–40 (YDPTIEDSY). GTP-binding positions include 57-61 (DTAGQ) and 116-119 (NKCD). Cys186 is subject to Cysteine methyl ester. Cys186 is lipidated: S-geranylgeranyl cysteine. A propeptide spans 187–189 (LLL) (removed in mature form).

The protein belongs to the small GTPase superfamily. Ras family.

It is found in the cell membrane. The enzyme catalyses GTP + H2O = GDP + phosphate + H(+). Its function is as follows. Ras proteins bind GDP/GTP and possess intrinsic GTPase activity. This chain is Ras-like protein 1 (RAS1), found in Physarum polycephalum (Slime mold).